We begin with the raw amino-acid sequence, 36 residues long: Kappa-theraphotoxin-Aa1a (36 aa).

3 disulfide bridges follow: C3–C18, C10–C23, and C17–C30. At I36 the chain carries Isoleucine amide.

It belongs to the neurotoxin 10 (Hwtx-1) family. As to expression, expressed by the venom gland.

It is found in the secreted. Functionally, selective inhibitor of voltage-gated potassium channel Kv10.1/KCNH1/EAG1 (IC(50)=637 nM). It acts by shifting the voltage dependence of channel activation in a depolarising direction. It shows a 100% inhibition at saturating concentrations, shows fast on-rates and is reversible. It also slightly affects channel inactivation, when the membrane is highly depolarised (&gt;+80 mV). The protein is Kappa-theraphotoxin-Aa1a of Avicularia aurantiaca (Yellow-banded pinktoe tarantula).